A 165-amino-acid chain; its full sequence is Xanthine-guanine phosphoribosyltransferase (165 aa).

5-phospho-alpha-D-ribose 1-diphosphate-binding positions include Arg41–Gly42 and Asp98–Thr106. Asp99 contacts Mg(2+). Guanine-binding residues include Asp102 and Ile145. Residues Asp102 and Ile145 each contribute to the xanthine site. GMP-binding positions include Asp102–Thr106 and Trp144–Ile145.

Belongs to the purine/pyrimidine phosphoribosyltransferase family. XGPT subfamily. In terms of assembly, homotetramer. Requires Mg(2+) as cofactor.

The protein resides in the cell inner membrane. The catalysed reaction is GMP + diphosphate = guanine + 5-phospho-alpha-D-ribose 1-diphosphate. It catalyses the reaction XMP + diphosphate = xanthine + 5-phospho-alpha-D-ribose 1-diphosphate. The enzyme catalyses IMP + diphosphate = hypoxanthine + 5-phospho-alpha-D-ribose 1-diphosphate. It participates in purine metabolism; GMP biosynthesis via salvage pathway; GMP from guanine: step 1/1. Its pathway is purine metabolism; XMP biosynthesis via salvage pathway; XMP from xanthine: step 1/1. In terms of biological role, purine salvage pathway enzyme that catalyzes the transfer of the ribosyl-5-phosphate group from 5-phospho-alpha-D-ribose 1-diphosphate (PRPP) to the N9 position of the 6-oxopurines guanine and xanthine to form the corresponding ribonucleotides GMP (guanosine 5'-monophosphate) and XMP (xanthosine 5'-monophosphate), with the release of PPi. To a lesser extent, also acts on hypoxanthine. The chain is Xanthine-guanine phosphoribosyltransferase from Agrobacterium fabrum (strain C58 / ATCC 33970) (Agrobacterium tumefaciens (strain C58)).